Reading from the N-terminus, the 151-residue chain is UPF0178 protein YaiI (151 aa).

The protein belongs to the UPF0178 family.

In Salmonella arizonae (strain ATCC BAA-731 / CDC346-86 / RSK2980), this protein is UPF0178 protein YaiI.